The primary structure comprises 167 residues: SsrA-binding protein (167 aa).

The segment covering 139–158 has biased composition (basic and acidic residues); that stretch reads QNHDKRDAAKDRDWQRDKQR. The tract at residues 139–167 is disordered; the sequence is QNHDKRDAAKDRDWQRDKQRVMRRHNRDA.

The protein belongs to the SmpB family.

It is found in the cytoplasm. In terms of biological role, required for rescue of stalled ribosomes mediated by trans-translation. Binds to transfer-messenger RNA (tmRNA), required for stable association of tmRNA with ribosomes. tmRNA and SmpB together mimic tRNA shape, replacing the anticodon stem-loop with SmpB. tmRNA is encoded by the ssrA gene; the 2 termini fold to resemble tRNA(Ala) and it encodes a 'tag peptide', a short internal open reading frame. During trans-translation Ala-aminoacylated tmRNA acts like a tRNA, entering the A-site of stalled ribosomes, displacing the stalled mRNA. The ribosome then switches to translate the ORF on the tmRNA; the nascent peptide is terminated with the 'tag peptide' encoded by the tmRNA and targeted for degradation. The ribosome is freed to recommence translation, which seems to be the essential function of trans-translation. The chain is SsrA-binding protein from Xanthomonas euvesicatoria pv. vesicatoria (strain 85-10) (Xanthomonas campestris pv. vesicatoria).